Here is a 295-residue protein sequence, read N- to C-terminus: Nucleotide-binding protein BH3569 (295 aa).

14-21 contacts ATP; it reads GMSGAGKT. A GTP-binding site is contributed by 65–68; sequence DLRG.

This sequence belongs to the RapZ-like family.

In terms of biological role, displays ATPase and GTPase activities. This Halalkalibacterium halodurans (strain ATCC BAA-125 / DSM 18197 / FERM 7344 / JCM 9153 / C-125) (Bacillus halodurans) protein is Nucleotide-binding protein BH3569.